Consider the following 184-residue polypeptide: Endothelial cell-specific molecule 1 (184 aa).

The first 21 residues, 1–21 (MKSLLLLTTLLIPLHLGMAWS), serve as a signal peptide directing secretion. The region spanning 24–102 (YAVDCPEHCD…GDEFGVCKDC (79 aa)) is the IGFBP N-terminal domain. 6 cysteine pairs are disulfide-bonded: cysteine 28–cysteine 51, cysteine 32–cysteine 53, cysteine 37–cysteine 54, cysteine 43–cysteine 57, cysteine 65–cysteine 83, and cysteine 77–cysteine 99. Positions 145-184 (RTSASQTERDAASGDGNAVREEIGDRNAARPSVMKWLNPR) are disordered. Residues 151-172 (TERDAASGDGNAVREEIGDRNA) show a composition bias toward basic and acidic residues. Serine 157 is a glycosylation site (O-linked (Xyl...) (chondroitin sulfate) serine).

O-glycosylated; contains chondroitin sulfate and dermatan sulfate. As to expression, pineal gland specific.

It is found in the secreted. Its function is as follows. Involved in angiogenesis; promotes angiogenic sprouting. May have potent implications in lung endothelial cell-leukocyte interactions. The protein is Endothelial cell-specific molecule 1 (Esm1) of Rattus norvegicus (Rat).